The chain runs to 189 residues: HGPRTase-like protein (189 aa).

This sequence belongs to the purine/pyrimidine phosphoribosyltransferase family. Archaeal HPRT subfamily.

Functionally, may catalyze a purine salvage reaction, the substrate is unknown. This Halorubrum lacusprofundi (strain ATCC 49239 / DSM 5036 / JCM 8891 / ACAM 34) protein is HGPRTase-like protein.